Consider the following 1832-residue polypeptide: Zinc finger protein 646 (1832 aa).

8 C2H2-type zinc fingers span residues 8–31 (LSCSDCQRHFPSLPELSRHRELLH), 48–70 (YRCQQCGRGYRHPGSLVNHRRTH), 75–97 (FPCTTCGKDFSNPMALKSHMRTH), 239–261 (YKCSQCGKTYKHAGSLTNHRQSH), 266–288 (YPCAICFKEFSNLMALKNHSRLH), 294–316 (YHCPHCPRVFRLPRELLEHQQSH), 374–396 (FRCGDCGRTYRHAGSLINHRKSH), and 401–424 (YPCSLCSKQLFNAAALKNHVRAHH). The segment at 26-47 (HRELLHPSPNQDSEEADSIPRP) is disordered. The span at 94–108 (MRTHAPEGRRRHRPP) shows a compositional bias: basic residues. A disordered region spans residues 94-200 (MRTHAPEGRR…TNSARAPPLP (107 aa)). Over residues 313 to 329 (QQSHEGERQEPRWEEKG) the composition is skewed to basic and acidic residues. Residues 313-346 (QQSHEGERQEPRWEEKGMPTTNGHTDESSQDQLP) form a disordered region. A Glycyl lysine isopeptide (Lys-Gly) (interchain with G-Cter in SUMO2) cross-link involves residue Lys-451. C2H2-type zinc fingers lie at residues 465-487 (YKCSECGRAYRHRGSLVNHRHSH) and 492-514 (YQCSLCPRKYPNLMALRNHVRVH). Residues Lys-534 and Lys-557 each participate in a glycyl lysine isopeptide (Lys-Gly) (interchain with G-Cter in SUMO2) cross-link. The C2H2-type 11 zinc finger occupies 575 to 597 (HICSICGLLFEDAESLERHGLTH). At Ser-612 the chain carries Phosphoserine. 2 consecutive C2H2-type zinc fingers follow at residues 617-639 (FACRDCGKSYRHSGSLINHRQTH) and 644-666 (FSCGACAKHFHTMAAMKNHLRRH). Positions 660–810 (KNHLRRHSRR…QPNSSSHSAN (151 aa)) are disordered. Residues 661-678 (NHLRRHSRRRSRRHRKRA) are compositionally biased toward basic residues. Lys-688 participates in a covalent cross-link: Glycyl lysine isopeptide (Lys-Gly) (interchain with G-Cter in SUMO2). The span at 735–767 (EGDKCGLERDETHFQGDKESGGTGEGLERKDAS) shows a compositional bias: basic and acidic residues. Residues 798–810 (ATGQPNSSSHSAN) show a composition bias toward polar residues. C2H2-type zinc fingers lie at residues 821 to 843 (HTCSDCGHSFPHATGLLSHRPCH), 848 to 870 (YQCSLCPKEFDSLPALRSHFQNH), and 881 to 904 (FLCCLCGMIFPGRAGYRLHRRQAH). Residues 901 to 931 (RQAHSSSGMTEGSEEEGEEEGVAEAAPARSP) are disordered. A compositionally biased stretch (acidic residues) spans 912-922 (GSEEEGEEEGV). Residues 958–980 (HICGCCGQTYDDLGSLERHHQSQ) form a C2H2-type 17; degenerate zinc finger. 2 consecutive C2H2-type zinc fingers follow at residues 1052 to 1074 (FRCNQCGKTYRHGGSLVNHRKIH) and 1079 to 1101 (FLCPVCSRCYPNLAAYRNHLRNH). The segment at 1103 to 1148 (RCKGSEPQVGPIPEAAGSSELQVGPIPEGGSNKPQHMAEEGPGQAE) is disordered. Residues Lys-1157, Lys-1168, and Lys-1178 each participate in a glycyl lysine isopeptide (Lys-Gly) (interchain with G-Cter in SUMO2) cross-link. C2H2-type zinc fingers lie at residues 1203-1225 (FSCEVCGRSYKHAGSLINHRQSH), 1230-1252 (FGCQACSKGFSNLMSLKNHRRIH), 1258-1280 (FRCSECGKAFRLRKQLASHQRVH), 1299-1321 (FRCGQCGRTYRHAGSLLNHRRSH), 1326-1348 (YSCPTCPKTYSNRMALKDHQRLH), and 1364-1386 (VRCALCGRSFPGRGSLERHLREH). A disordered region spans residues 1274–1294 (ASHQRVHMERRGGGGTRKATR). 2 disordered regions span residues 1377-1481 (GSLE…WVPQ) and 1509-1529 (TLSHMDSWDNRDNSSQLQPGS). Basic and acidic residues predominate over residues 1378–1393 (SLERHLREHEETEREP). Positions 1406 to 1417 (SEANLTGSQGLE) are enriched in polar residues. Over residues 1427 to 1438 (PHLEDGVPRPGE) the composition is skewed to basic and acidic residues. Over residues 1460 to 1475 (GKAGGWPVGGGLGNHS) the composition is skewed to gly residues. 6 consecutive C2H2-type zinc fingers follow at residues 1557-1579 (HYCLLCSKEFLNPVATKSHSHNH), 1585-1607 (FACPDCGKAFESHQELASHLQAH), 1677-1699 (FRCTQCGRSYRHAGSLLNHQKAH), 1704-1726 (YPCSLCPKLLPNLLSLKNHSRTH), 1732-1754 (HCCSICGKAFRTAARLEGHGRVH), and 1761-1783 (FTCPHCPRHFRRRISFVQHQQQH). Residues 1606–1672 (AHARGHSQVP…QAVTSMAAED (67 aa)) are disordered. The disordered stretch occupies residues 1781-1832 (QQHQEEWTVAGSGAPVAPVTGRGDLPLPPPPTPTTPLLDPSPQWPADLSFSL).

The protein belongs to the krueppel C2H2-type zinc-finger protein family.

The protein resides in the nucleus. May be involved in transcriptional regulation. The protein is Zinc finger protein 646 of Homo sapiens (Human).